The primary structure comprises 139 residues: D-ribose pyranase (139 aa).

The Proton donor role is filled by histidine 20. Residues aspartate 28, histidine 106, and 128 to 130 (YAN) each bind substrate.

It belongs to the RbsD / FucU family. RbsD subfamily. Homodecamer.

It is found in the cytoplasm. It catalyses the reaction beta-D-ribopyranose = beta-D-ribofuranose. It functions in the pathway carbohydrate metabolism; D-ribose degradation; D-ribose 5-phosphate from beta-D-ribopyranose: step 1/2. Its function is as follows. Catalyzes the interconversion of beta-pyran and beta-furan forms of D-ribose. The polypeptide is D-ribose pyranase (Aliivibrio fischeri (strain ATCC 700601 / ES114) (Vibrio fischeri)).